Here is a 756-residue protein sequence, read N- to C-terminus: MIRNTLAFLAILFLLIPTALLIIGSVSVPSTRMTLAKVEGTEFGIFGTCTGNGTDCTETSFGYNASSSLIDDFYYKGDKRLVLSKVLITHIISAFLSFLSAIFVFFSIFLVNQAVNIINIIVVFITTLLTCLAFAIELVLFLPHNTWQSYVTAGAIGSDLIAILALCLRSVSISRIGQKSARLEHVDTMNSSYSSYKTDVKYPLALDDKLSSVPTLPKFHDALTSTSEFGPPSDSGDTVGTTQYPGDIKYATGYESTVASPVPSRVAKLSSRDTPSIIADYDEFRKSESSPSRSSVLSTSKPEVHETEGYCPHKTGNRPGFPSLNIPRTRPTTAGIANTQFDLEPYRNRQAGSISSEGTDSRFFDVENQVSVAQTPSVKPEMFPKTARPFAAIHANASSTQLRNTENITHPGIPNHFAKTTSSVFDEPPATRMPQTRSPVNDHSSFPSDLPIKGEMSTNMTGAPRVGSRNNSSNDLHAQAGMLKNVGNGPRNAPRNNSSNNLHAQGGMPMNMRGPRGAPRNNSSGDLHIQSGMPMNGRNGPRDTSRNNSSSDLYAQSGMHPNMNNGHRGAPRNNSSNDLHAHGGMPVNMRGPRNTSRNNSSSEFNAQIPMNLRNGPRNASRSNSSTDLFGQSGIPGNSRGMPTSPNSRNNSALDLSMHGIPLANNSRQFKRPSYGNMSRPSFELNGSRNPSHGSLNTAHAGMGYGPRSMMRDPQNLSNVPPVSNTLDQLSGNADFELPVRGNRNNRRGPGGNRMIR.

Positions 1-24 are cleaved as a signal peptide; the sequence is MIRNTLAFLAILFLLIPTALLIIG. 2 N-linked (GlcNAc...) asparagine glycosylation sites follow: Asn-52 and Asn-64. The next 3 helical transmembrane spans lie at 91–111, 120–140, and 148–168; these read IISA…IFLV, IIVV…ELVL, and QSYV…ALCL. The N-linked (GlcNAc...) asparagine glycan is linked to Asn-190. Positions 281–328 are disordered; sequence YDEFRKSESSPSRSSVLSTSKPEVHETEGYCPHKTGNRPGFPSLNIPR. Residues 289–300 show a composition bias toward low complexity; the sequence is SSPSRSSVLSTS. N-linked (GlcNAc...) asparagine glycans are attached at residues Asn-396 and Asn-407. The disordered stretch occupies residues 427-453; it reads EPPATRMPQTRSPVNDHSSFPSDLPIK. Polar residues predominate over residues 433–447; it reads MPQTRSPVNDHSSFP. A Phosphoserine modification is found at Ser-438. N-linked (GlcNAc...) asparagine glycosylation is found at Asn-459, Asn-470, Asn-471, Asn-496, Asn-497, Asn-521, Asn-522, Asn-547, Asn-548, Asn-573, Asn-574, Asn-594, Asn-598, Asn-599, Asn-618, Asn-623, Asn-649, Asn-664, Asn-676, and Asn-685. The tract at residues 482-650 is disordered; the sequence is MLKNVGNGPR…MPTSPNSRNN (169 aa). Positions 485–520 are enriched in low complexity; the sequence is NVGNGPRNAPRNNSSNNLHAQGGMPMNMRGPRGAPR. Polar residues-rich tracts occupy residues 593–605, 617–629, and 640–650; these read RNTS…SEFN, RNAS…TDLF, and GMPTSPNSRNN. The span at 686-697 shows a compositional bias: polar residues; it reads GSRNPSHGSLNT. The disordered stretch occupies residues 686–713; that stretch reads GSRNPSHGSLNTAHAGMGYGPRSMMRDP. An N-linked (GlcNAc...) asparagine glycan is attached at Asn-715. Residues 735–756 are disordered; it reads FELPVRGNRNNRRGPGGNRMIR.

It to yeast YOL019W and YMR063W.

The protein resides in the cell membrane. Its subcellular location is the cell tip. Functionally, required for correct cell separation at high temperatures. In Schizosaccharomyces pombe (strain 972 / ATCC 24843) (Fission yeast), this protein is Membrane-anchored protein 1 (mac1).